Consider the following 698-residue polypeptide: Protein SST2 (698 aa).

The segment at 10–203 (ELSSKNFSRT…GAKPNVWSPT (194 aa)) is fungal-DR. Ser252 carries the phosphoserine modification. The DEP domain occupies 273–358 (SNAGIRLFEN…SRSSFFTLSK (86 aa)). Ser408 carries the post-translational modification Phosphoserine. The 270-residue stretch at 420 to 689 (KLDYVLTDPG…TQSDVYKDAS (270 aa)) folds into the RGS domain. Ser539 is subject to Phosphoserine; by MAPK. The segment at 545 to 586 (FPTNLYDPSPASAESAASSISSTEADTLGEPPEVSLKPSKNL) is disordered. Low complexity predominate over residues 551–570 (DPSPASAESAASSISSTEAD). Residue Ser587 is modified to Phosphoserine.

Post-translationally, phosphorylated by FUS3 and KSS1.

In terms of biological role, desensitization to alpha-factor pheromone. Is involved in regulating the signaling pathway for responding to mating pheromone. This chain is Protein SST2 (SST2), found in Saccharomyces cerevisiae (strain ATCC 204508 / S288c) (Baker's yeast).